We begin with the raw amino-acid sequence, 99 residues long: Protein RnfH (99 aa).

Belongs to the UPF0125 (RnfH) family.

This chain is Protein RnfH, found in Buchnera aphidicola subsp. Acyrthosiphon pisum (strain 5A).